We begin with the raw amino-acid sequence, 704 residues long: Transmembrane protein DDB_G0274347 (704 aa).

Positions 37 to 145 are disordered; the sequence is VEQRDEVNDE…NNYNNNNTPT (109 aa). Residues 43–67 show a composition bias toward acidic residues; that stretch reads VNDEFQEEEEELEDDDDDEDDEDEI. Basic and acidic residues predominate over residues 85–99; it reads HNDKEKEKKKDKQEE. Residues 100–113 show a composition bias toward acidic residues; the sequence is YIDSDDDDDDDGDE. Low complexity predominate over residues 114-142; sequence NYYLNNNNNNNNNINNNNNYNNNNYNNNN. Asparagine 166 carries an N-linked (GlcNAc...) asparagine glycan. A helical membrane pass occupies residues 255 to 275; it reads ALISMALLISLVAIIFYLPLP. Asparagine 354 is a glycosylation site (N-linked (GlcNAc...) asparagine). The next 3 membrane-spanning stretches (helical) occupy residues 370 to 390, 414 to 434, and 513 to 533; these read LKIFGSCILFGVILFVVWLFA, TLLVIPLLSMLFWSLVLLYFI, and LVSFLWTIIVGSFIYHTFLIS. A compositionally biased stretch (low complexity) spans 550-565; the sequence is TTTTTINTTTNTTSNT. A disordered region spans residues 550–576; the sequence is TTTTTINTTTNTTSNTSQQSNPLSKRL. N-linked (GlcNAc...) asparagine glycans are attached at residues asparagine 556, asparagine 560, and asparagine 564. Polar residues predominate over residues 566–576; sequence SQQSNPLSKRL. 2 helical membrane passes run 609-629 and 638-658; these read FIIVFIWTIAASLLWIYGVPP and IFFIFIALAPLIKSIYNLIII.

The protein resides in the membrane. The chain is Transmembrane protein DDB_G0274347 from Dictyostelium discoideum (Social amoeba).